A 102-amino-acid polypeptide reads, in one-letter code: UPF0213 protein Spro_0507 (102 aa).

A GIY-YIG domain is found at 6–81 (PTWHLYMLRM…KQLSKTQKER (76 aa)).

It belongs to the UPF0213 family.

This is UPF0213 protein Spro_0507 from Serratia proteamaculans (strain 568).